The following is a 240-amino-acid chain: Adapter protein MecA (240 aa).

Residues 119–132 (QRKQQKKNHQDKQQ) are compositionally biased toward basic and acidic residues. The segment at 119–138 (QRKQQKKNHQDKQQRRAHKP) is disordered.

It belongs to the MecA family. As to quaternary structure, homodimer.

Functionally, enables the recognition and targeting of unfolded and aggregated proteins to the ClpC protease or to other proteins involved in proteolysis. This Staphylococcus epidermidis (strain ATCC 35984 / DSM 28319 / BCRC 17069 / CCUG 31568 / BM 3577 / RP62A) protein is Adapter protein MecA.